The sequence spans 273 residues: Large ribosomal subunit protein uL29m (273 aa).

Positions 247–258 are enriched in basic and acidic residues; that stretch reads PLRHDRWEKGQE. The tract at residues 247–273 is disordered; the sequence is PLRHDRWEKGQEENSGGETEDGNAPSN.

It belongs to the universal ribosomal protein uL29 family. Component of the mitochondrial large ribosomal subunit. Mature mitochondrial ribosomes consist of a small (37S) and a large (54S) subunit. The 37S subunit contains at least 33 different proteins and 1 molecule of RNA (15S). The 54S subunit contains at least 45 different proteins and 1 molecule of RNA (21S).

It localises to the mitochondrion. The polypeptide is Large ribosomal subunit protein uL29m (mrpl4) (Aspergillus niger (strain ATCC MYA-4892 / CBS 513.88 / FGSC A1513)).